The following is a 221-amino-acid chain: Probable septum site-determining protein MinC (221 aa).

Belongs to the MinC family. In terms of assembly, interacts with MinD and FtsZ.

Its function is as follows. Cell division inhibitor that blocks the formation of polar Z ring septums. Rapidly oscillates between the poles of the cell to destabilize FtsZ filaments that have formed before they mature into polar Z rings. Prevents FtsZ polymerization. This chain is Probable septum site-determining protein MinC, found in Shewanella oneidensis (strain ATCC 700550 / JCM 31522 / CIP 106686 / LMG 19005 / NCIMB 14063 / MR-1).